The chain runs to 67 residues: Large ribosomal subunit protein eL24 (67 aa).

Positions 7, 10, 33, and 37 each coordinate Zn(2+). Residues 7 to 37 (CSYCGKEFEPGTGKMYVRNDGRVYFFCSRKC) form a C4-type zinc finger.

Belongs to the eukaryotic ribosomal protein eL24 family. Part of the 50S ribosomal subunit. Forms a cluster with proteins L3 and L14. Zn(2+) is required as a cofactor.

In terms of biological role, binds to the 23S rRNA. The sequence is that of Large ribosomal subunit protein eL24 from Thermococcus sibiricus (strain DSM 12597 / MM 739).